Here is a 341-residue protein sequence, read N- to C-terminus: Cell wall mannoprotein PIR1 (341 aa).

An N-terminal signal peptide occupies residues Met-1–Ala-18. The propeptide occupies Ala-19–Arg-63. 8 PIR1/2/3 repeats span residues Ala-64–Thr-82, Ala-83–Lys-101, Ala-102–Thr-120, Ala-126–Lys-144, Ala-145–Thr-163, Ala-164–Thr-182, Ala-183–Thr-201, and Val-202–Ser-220.

This sequence belongs to the PIR protein family. In terms of processing, covalently linked to beta-1,3-glucan of the inner cell wall layer via an alkali-sensitive ester linkage between the gamma-carboxyl group of glutamic acids, arising from specific glutamines within the PIR1/2/3 repeats, and hydroxyl groups of glucoses of beta-1,3-glucan chains. O-glycosylated. Extensively O-mannosylated.

The protein resides in the secreted. It localises to the cell wall. In terms of biological role, component of the outer cell wall layer. Required for stability of the cell wall and for optimal growth. Required for resistance against several antifungal and cell wall-perturbing agents and for tolerance to heat shock. In Saccharomyces cerevisiae (strain YJM789) (Baker's yeast), this protein is Cell wall mannoprotein PIR1 (PIR1).